Reading from the N-terminus, the 142-residue chain is Galactose-6-phosphate isomerase subunit LacA (142 aa).

This sequence belongs to the LacAB/RpiB family. As to quaternary structure, heteromultimeric protein consisting of LacA and LacB.

It catalyses the reaction aldehydo-D-galactose 6-phosphate = keto-D-tagatose 6-phosphate. The protein operates within carbohydrate metabolism; D-galactose 6-phosphate degradation; D-tagatose 6-phosphate from D-galactose 6-phosphate: step 1/1. The sequence is that of Galactose-6-phosphate isomerase subunit LacA from Streptococcus mutans serotype c (strain ATCC 700610 / UA159).